We begin with the raw amino-acid sequence, 141 residues long: uncharacterized protein (141 aa).

Its subcellular location is the mitochondrion. This is an uncharacterized protein from Arabidopsis thaliana (Mouse-ear cress).